The chain runs to 158 residues: Regulator of sigma D (158 aa).

This sequence belongs to the Rsd/AlgQ family. In terms of assembly, interacts with RpoD.

Its subcellular location is the cytoplasm. Binds RpoD and negatively regulates RpoD-mediated transcription activation by preventing the interaction between the primary sigma factor RpoD with the catalytic core of the RNA polymerase and with promoter DNA. May be involved in replacement of the RNA polymerase sigma subunit from RpoD to RpoS during the transition from exponential growth to the stationary phase. The sequence is that of Regulator of sigma D from Shigella dysenteriae serotype 1 (strain Sd197).